The chain runs to 63 residues: ATPase inhibitor, mitochondrial (63 aa).

A disordered region spans residues 1–23; sequence TAGATGATRQDGSTDAFEKREKA. Positions 18–62 form a coiled coil; the sequence is EKREKAQEDLYIRQHEKEQLEALKESLKKQKKSLDDLEBKIDDLT.

The protein belongs to the ATPase inhibitor family.

It is found in the mitochondrion. This protein forms a one-to-one complex with ATPase to inhibit the enzyme activity completely. In Cyberlindnera jadinii (Torula yeast), this protein is ATPase inhibitor, mitochondrial.